The chain runs to 207 residues: MTDCRLYLITPPAFDPQAFAPTLAAALDAGDVACVQLRLKDAPDEAILRAVEVLRPLVQARDVAFILNDRPDLAARSGCDGVHVGQEDTPYREARRLVGADAIVGVTCHDSRHLAMVAGEEGADYVAFGAFFPTGTKEPKTTADPEILTWWQEMMEVPCVAIGGITVETAPLLVQAGADFLAVCGGVWNHPAGPAAAVADFNRVMRG.

Residues 36–40 (QLRLK) and Asn-68 each bind 4-amino-2-methyl-5-(diphosphooxymethyl)pyrimidine. 2 residues coordinate Mg(2+): Asp-69 and Asp-88. Thr-107 is a binding site for 4-amino-2-methyl-5-(diphosphooxymethyl)pyrimidine. 2-[(2R,5Z)-2-carboxy-4-methylthiazol-5(2H)-ylidene]ethyl phosphate is bound at residue 134–136 (TGT). Lys-137 is a binding site for 4-amino-2-methyl-5-(diphosphooxymethyl)pyrimidine. Gly-164 lines the 2-[(2R,5Z)-2-carboxy-4-methylthiazol-5(2H)-ylidene]ethyl phosphate pocket.

Belongs to the thiamine-phosphate synthase family. It depends on Mg(2+) as a cofactor.

It catalyses the reaction 2-[(2R,5Z)-2-carboxy-4-methylthiazol-5(2H)-ylidene]ethyl phosphate + 4-amino-2-methyl-5-(diphosphooxymethyl)pyrimidine + 2 H(+) = thiamine phosphate + CO2 + diphosphate. The enzyme catalyses 2-(2-carboxy-4-methylthiazol-5-yl)ethyl phosphate + 4-amino-2-methyl-5-(diphosphooxymethyl)pyrimidine + 2 H(+) = thiamine phosphate + CO2 + diphosphate. It carries out the reaction 4-methyl-5-(2-phosphooxyethyl)-thiazole + 4-amino-2-methyl-5-(diphosphooxymethyl)pyrimidine + H(+) = thiamine phosphate + diphosphate. Its pathway is cofactor biosynthesis; thiamine diphosphate biosynthesis; thiamine phosphate from 4-amino-2-methyl-5-diphosphomethylpyrimidine and 4-methyl-5-(2-phosphoethyl)-thiazole: step 1/1. Functionally, condenses 4-methyl-5-(beta-hydroxyethyl)thiazole monophosphate (THZ-P) and 2-methyl-4-amino-5-hydroxymethyl pyrimidine pyrophosphate (HMP-PP) to form thiamine monophosphate (TMP). The sequence is that of Thiamine-phosphate synthase from Rhodospirillum centenum (strain ATCC 51521 / SW).